The primary structure comprises 492 residues: Glutamyl-tRNA(Gln) amidotransferase subunit A (492 aa).

Active-site charge relay system residues include lysine 79 and serine 154. The active-site Acyl-ester intermediate is serine 178.

Belongs to the amidase family. GatA subfamily. As to quaternary structure, heterotrimer of A, B and C subunits.

The enzyme catalyses L-glutamyl-tRNA(Gln) + L-glutamine + ATP + H2O = L-glutaminyl-tRNA(Gln) + L-glutamate + ADP + phosphate + H(+). Its function is as follows. Allows the formation of correctly charged Gln-tRNA(Gln) through the transamidation of misacylated Glu-tRNA(Gln) in organisms which lack glutaminyl-tRNA synthetase. The reaction takes place in the presence of glutamine and ATP through an activated gamma-phospho-Glu-tRNA(Gln). The protein is Glutamyl-tRNA(Gln) amidotransferase subunit A of Desulforudis audaxviator (strain MP104C).